A 235-amino-acid chain; its full sequence is Motile sperm domain-containing protein 3 (235 aa).

2 disordered regions span residues 1-25 (MRRG…RGAP) and 143-171 (ELQG…FQEH). Residues 33–145 (PVLVFPPDLV…RAPAYPLELQ (113 aa)) form the MSP domain. Residues 149–164 (DPAPRPGPPAGTPPPT) are compositionally biased toward pro residues. The next 2 membrane-spanning stretches (helical) occupy residues 180-200 (SFLL…LPLP) and 213-233 (VSLG…MVFL).

The protein localises to the membrane. The chain is Motile sperm domain-containing protein 3 (MOSPD3) from Homo sapiens (Human).